The following is a 332-amino-acid chain: NADH-quinone oxidoreductase subunit H (332 aa).

The next 9 helical transmembrane spans lie at 8–28, 44–66, 78–98, 120–140, 157–177, 196–216, 245–265, 274–294, and 312–332; these read IIEC…LAGF, IGPN…KLFA, PIFI…MAPI, VGIL…LLAG, IQFL…LMII, WLIF…YVEL, MFFI…SLVF, FIPG…LFMW, and WKIM…ILLF.

The protein belongs to the complex I subunit 1 family. NDH-1 is composed of 14 different subunits. Subunits NuoA, H, J, K, L, M, N constitute the membrane sector of the complex.

It localises to the cell inner membrane. The enzyme catalyses a quinone + NADH + 5 H(+)(in) = a quinol + NAD(+) + 4 H(+)(out). Its function is as follows. NDH-1 shuttles electrons from NADH, via FMN and iron-sulfur (Fe-S) centers, to quinones in the respiratory chain. The immediate electron acceptor for the enzyme in this species is believed to be ubiquinone. Couples the redox reaction to proton translocation (for every two electrons transferred, four hydrogen ions are translocated across the cytoplasmic membrane), and thus conserves the redox energy in a proton gradient. This subunit may bind ubiquinone. This Helicobacter hepaticus (strain ATCC 51449 / 3B1) protein is NADH-quinone oxidoreductase subunit H.